The chain runs to 536 residues: CBS domain-containing protein CBSCBSPB2 (536 aa).

The span at M1–S23 shows a compositional bias: low complexity. A disordered region spans residues M1–R60. 4 consecutive CBS domains span residues R66–E124, M132–K187, V228–E287, and M295–S354. Residues V406–T489 enclose the PB1 domain. The chain crosses the membrane as a helical span at residues V509 to V529.

It localises to the membrane. This Arabidopsis thaliana (Mouse-ear cress) protein is CBS domain-containing protein CBSCBSPB2 (CBSCBSPB2).